Here is a 435-residue protein sequence, read N- to C-terminus: MFILTMGLNHHTAPIDIREKLVFKETEEEMALVTLQQEKSILENVIISTCNRTEIVAVVDQIHTGRYYLKRFMANWFQMDMEKIEPYLFFHEESEAVNHLYKVTAGLDSLVLGETQILGQVKHAFEIAKQTATTGTLLNKLFREVVTFAKKVHHHTKINENAVSVSYAAVEVAKKLYGSLDNKKIVLIGAGEMSELALQNLAGSGMTDITIINRTKTNAELLANQFQAKVGAYENMNEHLLLADIVLVSTSAAEPIIKQAAMQELMEQKASSMLVIDIGLPRNVEHDCSYIPNFHLYDIDDLAGVVTANSIERQQIVLELEDTIESEVRNFFEWEKQLGVVPVIRALREKALDMQEVTMTSLENKLPGLTEREYIQIGKHMKSIINQMLKQPISELKEMSVEEDATTSIEHFKRIFGLTKTDVTIIEKEQAETRS.

Substrate contacts are provided by residues 49–52, S109, 114–116, and Q120; these read TCNR and ETQ. Residue C50 is the Nucleophile of the active site. 189–194 contacts NADP(+); that stretch reads GAGEMS.

The protein belongs to the glutamyl-tRNA reductase family. In terms of assembly, homodimer.

It carries out the reaction (S)-4-amino-5-oxopentanoate + tRNA(Glu) + NADP(+) = L-glutamyl-tRNA(Glu) + NADPH + H(+). Its pathway is porphyrin-containing compound metabolism; protoporphyrin-IX biosynthesis; 5-aminolevulinate from L-glutamyl-tRNA(Glu): step 1/2. Catalyzes the NADPH-dependent reduction of glutamyl-tRNA(Glu) to glutamate 1-semialdehyde (GSA). The sequence is that of Glutamyl-tRNA reductase from Listeria monocytogenes serotype 4a (strain HCC23).